A 366-amino-acid polypeptide reads, in one-letter code: tRNA/tmRNA (uracil-C(5))-methyltransferase (366 aa).

Q190, Y218, N223, E239, and D299 together coordinate S-adenosyl-L-methionine. C324 acts as the Nucleophile in catalysis. E358 acts as the Proton acceptor in catalysis.

It belongs to the class I-like SAM-binding methyltransferase superfamily. RNA M5U methyltransferase family. TrmA subfamily.

It catalyses the reaction uridine(54) in tRNA + S-adenosyl-L-methionine = 5-methyluridine(54) in tRNA + S-adenosyl-L-homocysteine + H(+). It carries out the reaction uridine(341) in tmRNA + S-adenosyl-L-methionine = 5-methyluridine(341) in tmRNA + S-adenosyl-L-homocysteine + H(+). Its function is as follows. Dual-specificity methyltransferase that catalyzes the formation of 5-methyluridine at position 54 (m5U54) in all tRNAs, and that of position 341 (m5U341) in tmRNA (transfer-mRNA). In Cronobacter sakazakii (strain ATCC BAA-894) (Enterobacter sakazakii), this protein is tRNA/tmRNA (uracil-C(5))-methyltransferase.